The primary structure comprises 159 residues: L-alanine exporter AlaE (159 aa).

Transmembrane regions (helical) follow at residues 17 to 37, 48 to 68, 86 to 106, and 110 to 130; these read FAMVIFSFITGMMIEVFVSGM, LSIPVNIAIAWPYGVFRDYLL, MVAYVLFQSPVYACILLAVGA, and QIITAVTSNAFVSGALGIVYG.

Belongs to the AlaE exporter family.

It is found in the cell inner membrane. Exports L-alanine. This is L-alanine exporter AlaE from Photobacterium profundum (strain SS9).